Here is an 82-residue protein sequence, read N- to C-terminus: RNA-binding protein Hfq (82 aa).

The Sm domain occupies 11 to 71; the sequence is DTFLNHVRKT…ISTIMPGAPI (61 aa).

The protein belongs to the Hfq family. In terms of assembly, homohexamer.

RNA chaperone that binds small regulatory RNA (sRNAs) and mRNAs to facilitate mRNA translational regulation in response to envelope stress, environmental stress and changes in metabolite concentrations. Also binds with high specificity to tRNAs. The sequence is that of RNA-binding protein Hfq from Bradyrhizobium sp. (strain BTAi1 / ATCC BAA-1182).